We begin with the raw amino-acid sequence, 59 residues long: Large ribosomal subunit protein uL30 (59 aa).

This sequence belongs to the universal ribosomal protein uL30 family. In terms of assembly, part of the 50S ribosomal subunit.

In Ruminiclostridium cellulolyticum (strain ATCC 35319 / DSM 5812 / JCM 6584 / H10) (Clostridium cellulolyticum), this protein is Large ribosomal subunit protein uL30.